Reading from the N-terminus, the 51-residue chain is Large ribosomal subunit protein bL33 (51 aa).

Positions 1 to 21 (MRDKIKLESSAGTGHFYTTTK) are disordered. The segment covering 10–20 (SAGTGHFYTTT) has biased composition (polar residues).

It belongs to the bacterial ribosomal protein bL33 family.

The polypeptide is Large ribosomal subunit protein bL33 (rpmG) (Neisseria meningitidis serogroup A / serotype 4A (strain DSM 15465 / Z2491)).